The following is a 285-amino-acid chain: Probable enoyl-CoA hydratase echA12 (285 aa).

It belongs to the enoyl-CoA hydratase/isomerase family.

It catalyses the reaction a (3S)-3-hydroxyacyl-CoA = a (2E)-enoyl-CoA + H2O. It carries out the reaction a 4-saturated-(3S)-3-hydroxyacyl-CoA = a (3E)-enoyl-CoA + H2O. In terms of biological role, could possibly oxidize fatty acids using specific components. In Mycobacterium bovis (strain ATCC BAA-935 / AF2122/97), this protein is Probable enoyl-CoA hydratase echA12 (echA12).